We begin with the raw amino-acid sequence, 299 residues long: ATP phosphoribosyltransferase (299 aa).

Belongs to the ATP phosphoribosyltransferase family. Long subfamily. In terms of assembly, equilibrium between an active dimeric form, an inactive hexameric form and higher aggregates. Interconversion between the various forms is largely reversible and is influenced by the natural substrates and inhibitors of the enzyme. Mg(2+) is required as a cofactor.

It is found in the cytoplasm. It catalyses the reaction 1-(5-phospho-beta-D-ribosyl)-ATP + diphosphate = 5-phospho-alpha-D-ribose 1-diphosphate + ATP. The protein operates within amino-acid biosynthesis; L-histidine biosynthesis; L-histidine from 5-phospho-alpha-D-ribose 1-diphosphate: step 1/9. With respect to regulation, feedback inhibited by histidine. Functionally, catalyzes the condensation of ATP and 5-phosphoribose 1-diphosphate to form N'-(5'-phosphoribosyl)-ATP (PR-ATP). Has a crucial role in the pathway because the rate of histidine biosynthesis seems to be controlled primarily by regulation of HisG enzymatic activity. In Klebsiella pneumoniae (strain 342), this protein is ATP phosphoribosyltransferase.